Reading from the N-terminus, the 704-residue chain is DNA-binding protein RFX2 (704 aa).

Positions 1-39 (MQNSEGGADSPASVALRPSAAAPPVPASPQRVLVQAASS) are disordered. Low complexity predominate over residues 10–20 (SPASVALRPSA). At S28 the chain carries Phosphoserine. A DNA-binding region (RFX-type winged-helix) is located at residues 199 to 274 (HLQWLLDNYE…YHYYGIRLKP (76 aa)). Residues 292–334 (QQPMHQKPRYRPAQKTDSLGDSSSHSGLHSTPEQTTAAQNQHH) are disordered. Residues 307–334 (TDSLGDSSSHSGLHSTPEQTTAAQNQHH) are compositionally biased toward low complexity. S416 carries the post-translational modification Phosphoserine.

The protein belongs to the RFX family. Homodimer; probably only forms homodimers in testis. Heterodimer; heterodimerizes with RFX1 and RFX3.

Its subcellular location is the nucleus. The protein localises to the cytoplasm. Functionally, transcription factor that acts as a key regulator of spermatogenesis. Acts by regulating expression of genes required for the haploid phase during spermiogenesis, such as genes required for cilium assembly and function. Recognizes and binds the X-box, a regulatory motif with DNA sequence 5'-GTNRCC(0-3N)RGYAAC-3' present on promoters. Probably activates transcription of the testis-specific histone gene H1-6. The sequence is that of DNA-binding protein RFX2 (RFX2) from Pongo abelii (Sumatran orangutan).